Consider the following 422-residue polypeptide: Mannose-1-phosphate guanylyltransferase regulatory subunit alpha-B (422 aa).

The segment at 2–253 is substrate-binding domain; the sequence is LKAIILIGGP…QHFWSQIKSA (252 aa). Residues glutamate 85 and glutamine 249 each coordinate GDP-alpha-D-mannose. The segment at 275–422 is hexapeptide repeat domain; sequence LATNQGGTPK…NRSFKNQIIL (148 aa). Residues 358–386 form a C-loop region; sequence TPSDPNPNDPYAKIDSETLFRDGGLTPSI.

This sequence belongs to the transferase hexapeptide repeat family. In terms of assembly, component of the GMPPA-GMPPB mannose-1-phosphate guanylyltransferase complex composed of 4 GMPPA subunits and 8 GMPPB subunits; the complex is organized into three layers, a central layer made up of 2 GMPPA dimers sandwiched between two layers each made up of 2 GMPPB dimers.

The protein operates within nucleotide-sugar biosynthesis; GDP-alpha-D-mannose biosynthesis; GDP-alpha-D-mannose from alpha-D-mannose 1-phosphate (GTP route): step 1/1. Functionally, regulatory subunit of the GMPPA-GMPPB mannose-1-phosphate guanylyltransferase complex; reduces the catalytic activity of GMPPB when part of the complex. Mediates allosteric feedback inhibition of GMPPB catalytic activity upon binding GDP-alpha-D-mannose. Together with GMPPB regulates GDP-alpha-D-mannose levels. One of two paralogs (gmppaa and gmppab) that may have redundant functions. The protein is Mannose-1-phosphate guanylyltransferase regulatory subunit alpha-B (gmppab) of Danio rerio (Zebrafish).